The following is a 443-amino-acid chain: DNA primase DnaG (443 aa).

The region spanning 169–243 (DSIIIVEGRA…DIDYVSRAPY (75 aa)) is the Toprim domain. Glu175, Asp217, and Asp219 together coordinate Mg(2+).

It belongs to the archaeal DnaG primase family. In terms of assembly, forms a ternary complex with MCM helicase and DNA. The cofactor is Mg(2+).

The enzyme catalyses ssDNA + n NTP = ssDNA/pppN(pN)n-1 hybrid + (n-1) diphosphate.. RNA polymerase that catalyzes the synthesis of short RNA molecules used as primers for DNA polymerase during DNA replication. The chain is DNA primase DnaG from Methanococcus vannielii (strain ATCC 35089 / DSM 1224 / JCM 13029 / OCM 148 / SB).